A 514-amino-acid polypeptide reads, in one-letter code: Maturase K (514 aa).

This sequence belongs to the intron maturase 2 family. MatK subfamily.

The protein resides in the plastid. It localises to the chloroplast. Functionally, usually encoded in the trnK tRNA gene intron. Probably assists in splicing its own and other chloroplast group II introns. This chain is Maturase K, found in Encephalartos altensteinii (Altenstein's bread tree).